The sequence spans 227 residues: Lectin (227 aa).

Residues 1 to 28 (MTMTSTTTKAMAMAAAVLAAAAVAATNA) form the signal peptide. Glutamine 29 carries the post-translational modification Pyrrolidone carboxylic acid. Chitin-binding type-1 domains lie at 29 to 70 (QTCG…ACCS), 71 to 113 (SQRC…PCRA), 114 to 156 (DIKC…ACCP), and 157 to 199 (EKRC…GCYK). Cystine bridges form between cysteine 31-cysteine 46, cysteine 40-cysteine 52, cysteine 45-cysteine 59, cysteine 63-cysteine 68, cysteine 74-cysteine 89, cysteine 83-cysteine 95, cysteine 88-cysteine 102, cysteine 106-cysteine 111, cysteine 117-cysteine 132, cysteine 126-cysteine 138, cysteine 131-cysteine 145, cysteine 149-cysteine 154, cysteine 160-cysteine 175, cysteine 169-cysteine 181, cysteine 174-cysteine 188, and cysteine 192-cysteine 197. A substrate-binding site is contributed by 38-40 (MIC). Substrate is bound at residue 90-101 (SQYGYCGFGSEY). A substrate-binding site is contributed by 142–143 (SE). Positions 202–227 (DGMAAILANNQSVSFEGIIESVAELV) are excised as a propeptide. N-linked (GlcNAc...) asparagine glycosylation is present at asparagine 211.

Functionally, N-acetyl-D-glucosamine binding lectin. The polypeptide is Lectin (Oryza sativa subsp. indica (Rice)).